We begin with the raw amino-acid sequence, 168 residues long: Cilia- and flagella-associated protein HOATZ (168 aa).

The tract at residues 142 to 168 (PKDKVPKSKEVLSESGLRDQEEVKALE) is disordered.

This sequence belongs to the HOATZ family. As to expression, specifically expressed in tissues with motile cilia and flagella, such as brain ependyma, lung, testis, and oviduct but not in whole brain, liver,kidney, spleen, and eyeball.

The protein resides in the cytoplasm. Its subcellular location is the cell projection. It localises to the cilium. Its function is as follows. Required for motile ciliogenesis and flagellar genesis by mediating the maturation of the glycolytic enzyme ENO4. This is Cilia- and flagella-associated protein HOATZ from Mus musculus (Mouse).